The following is a 760-amino-acid chain: EFRYSQYKVQYDMPKEAYESKWTQCIKLIDQGGENLEERLNSQFKNWYRQKYLNLEEYRRLTVLNQIAWKALSNQIQYSCRKIMNSDISSFKHINELKSLEHRAAKAAEAEMKKRAQKPKKKKSRRGWLCCGGGDIETVEPQQEEPVQTVQEQQVNEYGDILPTLRASITNSAINYYDTVKDGVYLDHETSDALYTDEDLLFDLEKQKYMDMLDTSQEESVEENEEEHTVDDEHVEEHTADDEHVEEPTVADDEHVEEPTVADEHVEEPTVAEEHVEEPTVAEEHVEEPASDVQQTSEAAPTIEIPDTLYYDILGVGVNADMNEITERYFKLAENYYPYQRSGSTVFHNFRKVNEAYQVLGDIDKKRWYNKYGYDGIKQVNFMNPSIFYLLSSLEKFKDFTGTPQIVTLLRFFFEKRLSMNDLENKSEHLLKFMEQYQKEREAHVSEYLLNILQPCIAGDSKWNVPIITKLEGLKGSRFDIPILESLRWIFKHVAKTHLKKSSKSAKKLQQRTQANKQELANINNNLMSTLKEYLGSSEQMNSITYNFENINSNVDNGNQSKNISDLSYTDQKEILEKIVSYIVDISLYDIENTALNAAEQLLSDNSVDEKTLKKRAQSLKKLSSIMERYAGGKRNDKKAKKYDTQDVVGYIMHGISTINKEMKNQNENVPEHVQHNAEANVEHDAEENVEHDAEENAEENVEENVEEVEENVEENVEENVGEKKMRREEKKKRVQEPIKIDEIQVYDIIKNEKKKKTEF.

Positions 214 to 300 (DTSQEESVEE…SDVQQTSEAA (87 aa)) are disordered. Residues 216 to 230 (SQEESVEENEEEHTV) are compositionally biased toward acidic residues. A compositionally biased stretch (basic and acidic residues) spans 231–242 (DDEHVEEHTADD). A compositionally biased stretch (acidic residues) spans 243 to 256 (EHVEEPTVADDEHV). Positions 262–288 (ADEHVEEPTVAEEHVEEPTVAEEHVEE) are enriched in basic and acidic residues. Residues 307–375 (DTLYYDILGV…KRWYNKYGYD (69 aa)) form the J domain. Residues asparagine 425, asparagine 559, and asparagine 563 are each glycosylated (N-linked (GlcNAc...) asparagine). Positions 683–692 (EHDAEENVEH) are enriched in basic and acidic residues. The segment at 683 to 738 (EHDAEENVEHDAEENAEENVEENVEEVEENVEENVEENVGEKKMRREEKKKRVQEP) is disordered. Over residues 693 to 720 (DAEENAEENVEENVEEVEENVEENVEEN) the composition is skewed to acidic residues.

It is found in the cell membrane. Its function is as follows. May disrupt the normal intermolecular interactions of the cytoplasmic domain of band 3 and thereby facilitate the invagination of the red cell membrane which is necessary for the formation of the parasitophorous vacuole. The chain is Ring-infected erythrocyte surface antigen (RESA) from Plasmodium falciparum (isolate NF7 / Ghana).